The chain runs to 106 residues: UPF0145 protein GSU2791 (106 aa).

Belongs to the UPF0145 family.

This is UPF0145 protein GSU2791 from Geobacter sulfurreducens (strain ATCC 51573 / DSM 12127 / PCA).